Here is a 660-residue protein sequence, read N- to C-terminus: Leucine-rich repeat transmembrane protein FLRT2 (660 aa).

A signal peptide spans 1 to 35 (MGLQTTKWPGRGAFILKFWLIISLGLYLQVSKLLA). 2 cysteine pairs are disulfide-bonded: cysteine 36–cysteine 42 and cysteine 40–cysteine 49. The LRRNT domain occupies 36 to 63 (CPSVCRCDRNFVYCNERSLTSVPLGIPE). Residues 36 to 540 (CPSVCRCDRN…QTTSHSMGSP (505 aa)) lie on the Extracellular side of the membrane. 10 LRR repeats span residues 62-87 (PEGV…LHNV), 88-108 (QSVH…MNLP), 109-131 (KNVR…ALAQ), 132-157 (LLKL…AFRE), 159-181 (ISLK…LPVD), 183-202 (QELR…AFQN), 203-228 (LTSL…TFSH), 229-251 (LTKL…DLPG), 252-274 (THLI…AFAN), and 275-298 (LRKL…VFDH). Asparagine 202 carries N-linked (GlcNAc...) asparagine glycosylation. An LRRCT domain is found at 310 to 362 (NPWFCDCSIKWVTEWLKYIPSSLNVRGFMCQGPEQVRGMAVRELNMNLLSCPT). 2 cysteine pairs are disulfide-bonded: cysteine 314/cysteine 339 and cysteine 316/cysteine 360. Over residues 371-396 (TPAPSTVSPTTQSPTLSVPSPSRGSV) the composition is skewed to low complexity. The interval 371-413 (TPAPSTVSPTTQSPTLSVPSPSRGSVPPAPTPSKLPTIPDWDG) is disordered. Residues 419 to 517 (PPISERIQLS…ICSEATTHAS (99 aa)) enclose the Fibronectin type-III domain. Residues 541–561 (FLLAGLIGGAVIFVLVVLLSV) traverse the membrane as a helical segment. At 562–660 (FCWHMHKKGR…SVPDLEHCHT (99 aa)) the chain is on the cytoplasmic side.

In terms of assembly, self-associates (via leucine-rich repeats), giving rise to homooligomers. Interacts with FGFR1. Interacts with FGFR2. Interacts (via extracellular domain) with ADGRL1/LPHN1. Interacts (via extracellular domain) with ADGRL3 (via olfactomedin-like domain). Interacts (via extracellular domain) with UNC5D (via the first Ig-like domain). Can also interact (via extracellular domain) with UNC5B, but with much lower affinity. Interacts (via extracellular domain) with FN1. In terms of processing, N-glycosylated. Post-translationally, proteolytic cleavage in the juxtamembrane region gives rise to a soluble ectodomain. Cleavage is probably effected by a metalloprotease. In terms of tissue distribution, detected in adult brain (at protein level).

It localises to the cell membrane. The protein resides in the endoplasmic reticulum membrane. Its subcellular location is the cell junction. It is found in the focal adhesion. The protein localises to the secreted. It localises to the extracellular space. The protein resides in the extracellular matrix. Its subcellular location is the synapse. It is found in the synaptosome. The protein localises to the microsome membrane. Functionally, functions in cell-cell adhesion, cell migration and axon guidance. Mediates cell-cell adhesion via its interactions with ADGRL3 and probably also other latrophilins that are expressed at the surface of adjacent cells. May play a role in the migration of cortical neurons during brain development via its interaction with UNC5D. Mediates axon growth cone collapse and plays a repulsive role in neuron guidance via its interaction with UNC5D, and possibly also other UNC-5 family members. Plays a role in fibroblast growth factor-mediated signaling cascades. Required for normal organization of the cardiac basement membrane during embryogenesis, and for normal embryonic epicardium and heart morphogenesis. The chain is Leucine-rich repeat transmembrane protein FLRT2 from Mus musculus (Mouse).